The chain runs to 333 residues: Cilia- and flagella-associated protein 119 (333 aa).

Positions 1–10 are enriched in polar residues; that stretch reads MITPSSSQSL. Disordered stretches follow at residues 1 to 70 and 309 to 333; these read MITP…ANLF and RLSSKLAALEQPFQTPPSKGKTKTK. Ser34 carries the post-translational modification Phosphoserine. The segment covering 44 to 58 has biased composition (polar residues); it reads TDMQTESPAEATSSP. Residues 284–319 adopt a coiled-coil conformation; sequence IKSQLSKELRQLQQLVEERLKESEERLSSKLAALEQ.

It localises to the cell projection. The protein localises to the cilium. The protein resides in the flagellum. Its subcellular location is the cytoplasmic vesicle. It is found in the secretory vesicle. It localises to the acrosome. The protein localises to the cytoplasm. This chain is Cilia- and flagella-associated protein 119, found in Mus musculus (Mouse).